A 372-amino-acid chain; its full sequence is Glutamate 5-kinase (372 aa).

K6 provides a ligand contact to ATP. The substrate site is built by S46, D133, and N145. Residues 165–166 (TD) and 207–213 (TGGMYTK) each bind ATP. The 79-residue stretch at 272-350 (SGRLFIDEGA…HEIEKILGYK (79 aa)) folds into the PUA domain.

The protein belongs to the glutamate 5-kinase family.

It localises to the cytoplasm. It carries out the reaction L-glutamate + ATP = L-glutamyl 5-phosphate + ADP. It participates in amino-acid biosynthesis; L-proline biosynthesis; L-glutamate 5-semialdehyde from L-glutamate: step 1/2. Its function is as follows. Catalyzes the transfer of a phosphate group to glutamate to form L-glutamate 5-phosphate. This is Glutamate 5-kinase from Thermoanaerobacter pseudethanolicus (strain ATCC 33223 / 39E) (Clostridium thermohydrosulfuricum).